The chain runs to 493 residues: Membrane-bound lytic murein transglycosylase F (493 aa).

The N-terminal stretch at 1–21 is a signal peptide; that stretch reads MKRLRFNYLLIGLITVLLALA. The non-LT domain stretch occupies residues 22–268; the sequence is LWPSIPWYGG…RLDEKYLGHV (247 aa). The LT domain stretch occupies residues 269 to 493; it reads GTFDYVDTRT…LNPVSALPLP (225 aa). The active site involves Glu313.

It in the N-terminal section; belongs to the bacterial solute-binding protein 3 family. This sequence in the C-terminal section; belongs to the transglycosylase Slt family.

Its subcellular location is the cell outer membrane. It carries out the reaction Exolytic cleavage of the (1-&gt;4)-beta-glycosidic linkage between N-acetylmuramic acid (MurNAc) and N-acetylglucosamine (GlcNAc) residues in peptidoglycan, from either the reducing or the non-reducing ends of the peptidoglycan chains, with concomitant formation of a 1,6-anhydrobond in the MurNAc residue.. In terms of biological role, murein-degrading enzyme that degrades murein glycan strands and insoluble, high-molecular weight murein sacculi, with the concomitant formation of a 1,6-anhydromuramoyl product. Lytic transglycosylases (LTs) play an integral role in the metabolism of the peptidoglycan (PG) sacculus. Their lytic action creates space within the PG sacculus to allow for its expansion as well as for the insertion of various structures such as secretion systems and flagella. The protein is Membrane-bound lytic murein transglycosylase F of Erwinia tasmaniensis (strain DSM 17950 / CFBP 7177 / CIP 109463 / NCPPB 4357 / Et1/99).